Here is a 556-residue protein sequence, read N- to C-terminus: 2-succinyl-5-enolpyruvyl-6-hydroxy-3-cyclohexene-1-carboxylate synthase (556 aa).

The protein belongs to the TPP enzyme family. MenD subfamily. Homodimer. Mg(2+) is required as a cofactor. The cofactor is Mn(2+). Thiamine diphosphate serves as cofactor.

The catalysed reaction is isochorismate + 2-oxoglutarate + H(+) = 5-enolpyruvoyl-6-hydroxy-2-succinyl-cyclohex-3-ene-1-carboxylate + CO2. It functions in the pathway quinol/quinone metabolism; 1,4-dihydroxy-2-naphthoate biosynthesis; 1,4-dihydroxy-2-naphthoate from chorismate: step 2/7. The protein operates within quinol/quinone metabolism; menaquinone biosynthesis. Catalyzes the thiamine diphosphate-dependent decarboxylation of 2-oxoglutarate and the subsequent addition of the resulting succinic semialdehyde-thiamine pyrophosphate anion to isochorismate to yield 2-succinyl-5-enolpyruvyl-6-hydroxy-3-cyclohexene-1-carboxylate (SEPHCHC). This is 2-succinyl-5-enolpyruvyl-6-hydroxy-3-cyclohexene-1-carboxylate synthase from Staphylococcus epidermidis (strain ATCC 35984 / DSM 28319 / BCRC 17069 / CCUG 31568 / BM 3577 / RP62A).